The sequence spans 290 residues: Light-independent protochlorophyllide reductase iron-sulfur ATP-binding protein (290 aa).

ATP-binding positions include 10-15 (GIGKST) and K39. S14 is a binding site for Mg(2+). Residues C95 and C129 each contribute to the [4Fe-4S] cluster site. 180–181 (NR) provides a ligand contact to ATP.

Belongs to the NifH/BchL/ChlL family. Homodimer. Protochlorophyllide reductase is composed of three subunits; ChlL, ChlN and ChlB. It depends on [4Fe-4S] cluster as a cofactor.

Its subcellular location is the plastid. The protein resides in the chloroplast. It carries out the reaction chlorophyllide a + oxidized 2[4Fe-4S]-[ferredoxin] + 2 ADP + 2 phosphate = protochlorophyllide a + reduced 2[4Fe-4S]-[ferredoxin] + 2 ATP + 2 H2O. The protein operates within porphyrin-containing compound metabolism; chlorophyll biosynthesis (light-independent). Its function is as follows. Component of the dark-operative protochlorophyllide reductase (DPOR) that uses Mg-ATP and reduced ferredoxin to reduce ring D of protochlorophyllide (Pchlide) to form chlorophyllide a (Chlide). This reaction is light-independent. The L component serves as a unique electron donor to the NB-component of the complex, and binds Mg-ATP. The sequence is that of Light-independent protochlorophyllide reductase iron-sulfur ATP-binding protein from Cycas taitungensis (Prince sago).